The sequence spans 937 residues: Periplasmic nitrate reductase (937 aa).

A signal peptide (tat-type signal) is located at residues 1–42 (MTSKIQGKKPTLSRRDFIKSAAAASAAASVGLSIPSVMSAEA). The region spanning 49-110 (WKWDKSVCRF…FCAKIMYGAD (62 aa)) is the 4Fe-4S Mo/W bis-MGD-type domain. Residues Cys56, Cys59, Cys63, and Cys96 each coordinate [4Fe-4S] cluster. Residues Lys98, Gln166, Asn191, Cys195, 228-235 (WGANMAEM), Met433, Gln437, Asn543, 568-569 (SE), Lys591, Asp618, and 827-836 (TGRVLEHWHS) each bind Mo-bis(molybdopterin guanine dinucleotide). Trp903 is a substrate binding site. 2 residues coordinate Mo-bis(molybdopterin guanine dinucleotide): Asn911 and Lys928.

The protein belongs to the prokaryotic molybdopterin-containing oxidoreductase family. NasA/NapA/NarB subfamily. Component of the periplasmic nitrate reductase NapAB complex composed of NapA and NapB. The cofactor is [4Fe-4S] cluster. Requires Mo-bis(molybdopterin guanine dinucleotide) as cofactor. Post-translationally, predicted to be exported by the Tat system. The position of the signal peptide cleavage has not been experimentally proven.

The protein resides in the periplasm. The enzyme catalyses 2 Fe(II)-[cytochrome] + nitrate + 2 H(+) = 2 Fe(III)-[cytochrome] + nitrite + H2O. In terms of biological role, catalytic subunit of the periplasmic nitrate reductase complex NapAB. Receives electrons from NapB and catalyzes the reduction of nitrate to nitrite. This is Periplasmic nitrate reductase from Helicobacter hepaticus (strain ATCC 51449 / 3B1).